The following is a 181-amino-acid chain: Large ribosomal subunit protein uL10 (181 aa).

It belongs to the universal ribosomal protein uL10 family. In terms of assembly, part of the ribosomal stalk of the 50S ribosomal subunit. The N-terminus interacts with L11 and the large rRNA to form the base of the stalk. The C-terminus forms an elongated spine to which L12 dimers bind in a sequential fashion forming a multimeric L10(L12)X complex.

Its function is as follows. Forms part of the ribosomal stalk, playing a central role in the interaction of the ribosome with GTP-bound translation factors. The sequence is that of Large ribosomal subunit protein uL10 from Trichormus variabilis (strain ATCC 29413 / PCC 7937) (Anabaena variabilis).